We begin with the raw amino-acid sequence, 114 residues long: Cytochrome b-c1 complex subunit 1, mitochondrial (114 aa).

Lys31 carries the post-translational modification N6-acetyllysine.

This sequence belongs to the peptidase M16 family. UQCRC1/QCR1 subfamily. As to quaternary structure, component of the ubiquinol-cytochrome c oxidoreductase (cytochrome b-c1 complex, complex III, CIII), a multisubunit enzyme composed of 11 subunits. The complex is composed of 3 respiratory subunits cytochrome b, cytochrome c1 and Rieske protein UQCRFS1, 2 core protein subunits UQCRC1/QCR1 and UQCRC2/QCR2, and 6 low-molecular weight protein subunits UQCRH/QCR6, UQCRB/QCR7, UQCRQ/QCR8, UQCR10/QCR9, UQCR11/QCR10 and subunit 9, the cleavage product of Rieske protein UQCRFS1. The complex exists as an obligatory dimer and forms supercomplexes (SCs) in the inner mitochondrial membrane with NADH-ubiquinone oxidoreductase (complex I, CI) and cytochrome c oxidase (complex IV, CIV), resulting in different assemblies (supercomplex SCI(1)III(2)IV(1) and megacomplex MCI(2)III(2)IV(2)). Interacts with UQCC6. Interacts with STMP1.

It is found in the mitochondrion inner membrane. Functionally, component of the ubiquinol-cytochrome c oxidoreductase, a multisubunit transmembrane complex that is part of the mitochondrial electron transport chain which drives oxidative phosphorylation. The respiratory chain contains 3 multisubunit complexes succinate dehydrogenase (complex II, CII), ubiquinol-cytochrome c oxidoreductase (cytochrome b-c1 complex, complex III, CIII) and cytochrome c oxidase (complex IV, CIV), that cooperate to transfer electrons derived from NADH and succinate to molecular oxygen, creating an electrochemical gradient over the inner membrane that drives transmembrane transport and the ATP synthase. The cytochrome b-c1 complex catalyzes electron transfer from ubiquinol to cytochrome c, linking this redox reaction to translocation of protons across the mitochondrial inner membrane, with protons being carried across the membrane as hydrogens on the quinol. In the process called Q cycle, 2 protons are consumed from the matrix, 4 protons are released into the intermembrane space and 2 electrons are passed to cytochrome c. The 2 core subunits UQCRC1/QCR1 and UQCRC2/QCR2 are homologous to the 2 mitochondrial-processing peptidase (MPP) subunits beta-MPP and alpha-MPP respectively, and they seem to have preserved their MPP processing properties. May be involved in the in situ processing of UQCRFS1 into the mature Rieske protein and its mitochondrial targeting sequence (MTS)/subunit 9 when incorporated into complex III. Seems to play an important role in the maintenance of proper mitochondrial function in nigral dopaminergic neurons. The chain is Cytochrome b-c1 complex subunit 1, mitochondrial from Mesocricetus auratus (Golden hamster).